The primary structure comprises 269 residues: C-type lectin domain family 2 member G (269 aa).

Topologically, residues 1 to 107 (MNITRASLPM…SPESSAKLYC (107 aa)) are cytoplasmic. The chain crosses the membrane as a helical; Signal-anchor for type II membrane protein span at residues 108–128 (CCGVIMVLTVAVVALSVALPA). Residues 129–269 (TKTEQILINK…SLHCPTPVPV (141 aa)) are Extracellular-facing. The C-type lectin domain maps to 150 to 254 (VGNKCFYFSE…HYIPRIWICS (105 aa)). Residue asparagine 163 is glycosylated (N-linked (GlcNAc...) asparagine). A disulfide bridge links cysteine 171 with cysteine 253.

As to expression, detected in vagina, eye, tongue, stomach and spleen.

Its subcellular location is the cell membrane. In terms of biological role, inhibits osteoclast formation. The protein is C-type lectin domain family 2 member G (Clec2g) of Mus musculus (Mouse).